The sequence spans 541 residues: Calcium-dependent protein kinase 25 (541 aa).

Gly residues predominate over residues 1–11 (MGQCCTGGGKA). Residues 1–74 (MGQCCTGGGK…AGPIGEVLER (74 aa)) form a disordered region. Glycine 2 carries N-myristoyl glycine lipidation. Residues 38 to 67 (AKQQPCSPAAKAAATEAAAAASSSKKPAGP) show a composition bias toward low complexity. The region spanning 83 to 341 (YSIGKELGRG…AFQVLNHPWI (259 aa)) is the Protein kinase domain. Residues 89–97 (LGRGQFGVT) and lysine 112 each bind ATP. Aspartate 207 serves as the catalytic Proton acceptor. An autoinhibitory domain region spans residues 347–377 (APDVPLDNVVLNRLKQFRAMNQFKKAALRII). 4 EF-hand domains span residues 384-419 (EEIKGLKEMFKNIDKDNSGTITLEELKNGLAKQGTK), 420-455 (FSDNEIEQLMEAADADGNGIIDYEEFVTATVHMNKM), 456-491 (DREEHLYTAFQYFDKDNSGYITKEELEQALKEQGLY), and 493-526 (ANEIKDVITDADSNNDGRIDYSEFVAMMRKGSGC). Positions 397, 399, 401, 403, 408, 433, 435, 437, 444, 469, 471, 473, 475, 480, 504, 506, 508, 510, and 515 each coordinate Ca(2+).

It belongs to the protein kinase superfamily. Ser/Thr protein kinase family. CDPK subfamily. Specifically expressed in heading panicles, spikelets and mature pollen grains. Not expressed in vegetative tissues.

Its subcellular location is the membrane. The catalysed reaction is L-seryl-[protein] + ATP = O-phospho-L-seryl-[protein] + ADP + H(+). The enzyme catalyses L-threonyl-[protein] + ATP = O-phospho-L-threonyl-[protein] + ADP + H(+). Activated by calcium. Autophosphorylation may play an important role in the regulation of the kinase activity. Functionally, may play a role in signal transduction pathways that involve calcium as a second messenger. In Oryza sativa subsp. japonica (Rice), this protein is Calcium-dependent protein kinase 25.